The chain runs to 78 residues: Small integral membrane protein 1 (78 aa).

Met-1 bears the N-acetylmethionine mark. The span at 1-18 (MQPQESHVHYSRWEDGSR) shows a compositional bias: basic and acidic residues. The segment at 1–20 (MQPQESHVHYSRWEDGSRDG) is disordered. The Cytoplasmic portion of the chain corresponds to 1-46 (MQPQESHVHYSRWEDGSRDGVSLGAVSSTEEASRCRRISQRLCTGK). Phosphoserine is present on residues Ser-6, Ser-17, Ser-22, and Ser-27. The helical; Signal-anchor for type II membrane protein transmembrane segment at 47 to 67 (LGIAMKVLGGVALFWIIFILG) threads the bilayer. The Extracellular portion of the chain corresponds to 68-78 (YLTGYYVHKCK). Positions 68–78 (YLTGYYVHKCK) are displays the Vel antigen.

This sequence belongs to the SMIM1 family. In terms of assembly, homooligomer; disulfide-linked. Highly expressed in the bone marrow and expressed at lower levels in non-hematopoietic tissues. Highly expressed in erythroleukemia cell lines. Up-regulated in CD34+ hematopoietic progenitors cultured toward red blood cells.

Its subcellular location is the cell membrane. Its function is as follows. Regulator of red blood cell formation. This chain is Small integral membrane protein 1, found in Homo sapiens (Human).